The chain runs to 604 residues: UvrABC system protein C (604 aa).

Positions 10–89 (ELPGVYLMKD…VKKNRPHYNI (80 aa)) constitute a GIY-YIG domain. Residues 199-234 (SGTIKELQEKMNIHAIAQEYESAAVIRDQIDALKSL) form the UVR domain.

It belongs to the UvrC family. In terms of assembly, interacts with UvrB in an incision complex.

It is found in the cytoplasm. The UvrABC repair system catalyzes the recognition and processing of DNA lesions. UvrC both incises the 5' and 3' sides of the lesion. The N-terminal half is responsible for the 3' incision and the C-terminal half is responsible for the 5' incision. This is UvrABC system protein C from Methanococcoides burtonii (strain DSM 6242 / NBRC 107633 / OCM 468 / ACE-M).